The sequence spans 1090 residues: Vinculin (1090 aa).

2 repeat units span residues 339–446 and 455–561. Positions 339 to 561 are 2 X repeats; the sequence is DADNVTVMRK…LKNALRDLGD (223 aa). Disordered stretches follow at residues 811 to 842 and 864 to 895; these read GVPM…SQVI and DIPA…EEET. Residues 817–830 are compositionally biased toward polar residues; sequence GRHSSYQESISRAS. The span at 866 to 887 shows a compositional bias: pro residues; sequence PAPPRPPPPVELSPPPRPPPPP.

It belongs to the vinculin/alpha-catenin family. As to quaternary structure, may interact with sorb-1. As to expression, expressed in gonadal sheath cells and the spermatheca. Expressed in body wall muscles.

Its subcellular location is the cytoplasm. It localises to the cytoskeleton. The protein localises to the cell junction. It is found in the adherens junction. The protein resides in the cell membrane. Its subcellular location is the focal adhesion. In terms of biological role, involved in cell adhesion. May be involved in the attachment of the actin-based microfilaments to the plasma membrane. Involved in ovulation. This is Vinculin from Caenorhabditis elegans.